Here is a 197-residue protein sequence, read N- to C-terminus: Guanylate kinase (197 aa).

The Guanylate kinase-like domain maps to 7–185 (GLIIILSSPS…TLKKIHEIIV (179 aa)). Residue 14–21 (SPSGTGKS) participates in ATP binding.

Belongs to the guanylate kinase family.

The protein resides in the cytoplasm. It catalyses the reaction GMP + ATP = GDP + ADP. Functionally, essential for recycling GMP and indirectly, cGMP. The sequence is that of Guanylate kinase (gmk) from Rickettsia prowazekii (strain Madrid E).